Consider the following 84-residue polypeptide: Beta-defensin 119 (84 aa).

A signal peptide spans Met1–Gly21. Disulfide bonds link Cys28-Cys55, Cys35-Cys49, and Cys39-Cys56.

It belongs to the beta-defensin family.

The protein resides in the secreted. Functionally, has antibacterial activity. In Gorilla gorilla gorilla (Western lowland gorilla), this protein is Beta-defensin 119 (DEFB119).